The following is a 2541-amino-acid chain: Talin-1 (2541 aa).

The 318-residue stretch at 86–403 (RPLKIRMLDG…GYIDIILKKK (318 aa)) folds into the FERM domain. Positions 280-435 (FMAHKNCGNM…PKKSTVLQQQ (156 aa)) are interaction with LAYN. The segment at 482 to 655 (RGHMPPLTSA…QTSGELLQQI (174 aa)) is helical bundle R1. Positions 656–786 (GESDTDPRFQ…ALNDLLQHIK (131 aa)) are helical bundle R2. The interval 787-911 (QHATGGQPIG…NAAAQNAIKK (125 aa)) is helical bundle R3. A helical bundle R4 region spans residues 913–1043 (LVHKLEHAAK…RTAAQKAQEA (131 aa)). The interval 1045-1205 (GPLEIDSALG…NRCVNCLPGQ (161 aa)) is helical bundle R5. The interval 1206–1356 (RDVDAAIRMV…QLITMCTQQA (151 aa)) is helical bundle R6. A helical bundle R7A region spans residues 1357–1452 (PGQKECDNAL…AYLVGVSDPN (96 aa)). An interaction with VCL and F-actin region spans residues 1358-1658 (GQKECDNALR…NMRDKAPGQR (301 aa)). The helical bundle R8 stretch occupies residues 1460–1579 (LVDPTQFARA…NLTAFASNPE (120 aa)). T1486 carries an O-linked (GlcNAc) threonine glycan. The interval 1580-1652 (FATVPAQISP…IKKLITNMRD (73 aa)) is helical bundle R7B. Positions 1654–1821 (APGQRECDEA…TLNEAASAAG (168 aa)) are helical bundle R9. Residues 1822-1972 (VVGGMVDSIT…VLAALQAGNR (151 aa)) are helical bundle R10. The O-linked (GlcNAc) threonine glycan is linked to T1889. A helical bundle R11 region spans residues 1973 to 2139 (GTQACITAAS…TVKAVEDEAT (167 aa)). Positions 2140–2293 (KGTRALEATI…QAAEAMKGTE (154 aa)) are helical bundle R12. Residues 2292–2531 (TEWVDPEDPT…MIRQQQYKFL (240 aa)) enclose the I/LWEQ domain. A helical bundle R13 region spans residues 2299 to 2481 (DPTVIAENEL…AAQKAAAFQD (183 aa)).

Interacts with PIP5K1C and NRAP. Binds with high affinity to vinculin VCL and with low affinity to integrins. Interacts with APBB1IP; this inhibits VCL binding. Interacts with F-actin. Interacts with LAYN. Interacts with THSD1. Post-translationally, phosphorylated.

The protein resides in the cell projection. It localises to the ruffle membrane. It is found in the cytoplasm. Its subcellular location is the cytoskeleton. The protein localises to the cell surface. The protein resides in the cell junction. It localises to the focal adhesion. High molecular weight cytoskeletal protein concentrated at regions of cell-substratum contact and, in lymphocytes, at cell-cell contacts. Involved in connections of major cytoskeletal structures to the plasma membrane. The polypeptide is Talin-1 (TLN1) (Gallus gallus (Chicken)).